The sequence spans 163 residues: UPF0478 protein SAB1599c (163 aa).

The helical transmembrane segment at 7–27 (IAGIIAAIAFLILCIGIVAVL) threads the bilayer.

It belongs to the UPF0478 family.

Its subcellular location is the cell membrane. In Staphylococcus aureus (strain bovine RF122 / ET3-1), this protein is UPF0478 protein SAB1599c.